The following is a 254-amino-acid chain: Phosphomannomutase (254 aa).

Catalysis depends on Asp-19, which acts as the Nucleophile. Mg(2+) contacts are provided by Asp-19 and Asp-21. Catalysis depends on Asp-21, which acts as the Proton donor/acceptor. The alpha-D-mannose 1-phosphate site is built by Arg-28, Arg-130, Arg-141, Arg-148, Ser-186, and Asp-188. Mg(2+)-binding residues include Asp-216, Phe-228, Asp-230, and Thr-233. Ser-240 is modified (phosphoserine).

Belongs to the eukaryotic PMM family. As to quaternary structure, homodimer.

The protein resides in the cytoplasm. It carries out the reaction alpha-D-mannose 1-phosphate = D-mannose 6-phosphate. The protein operates within nucleotide-sugar biosynthesis; GDP-alpha-D-mannose biosynthesis; alpha-D-mannose 1-phosphate from D-fructose 6-phosphate: step 2/2. Functionally, involved in the synthesis of the GDP-mannose and dolichol-phosphate-mannose required for a number of critical mannosyl transfer reactions such as folding and glycosylation of secretory proteins in the ER lumen. In Saccharomyces cerevisiae (strain ATCC 204508 / S288c) (Baker's yeast), this protein is Phosphomannomutase.